A 207-amino-acid chain; its full sequence is Outer-membrane lipoprotein LolB (207 aa).

The signal sequence occupies residues 1–21; the sequence is MPMRKRHFYRLLPLASLLLAA. The N-palmitoyl cysteine moiety is linked to residue Cys22. The S-diacylglycerol cysteine moiety is linked to residue Cys22.

It belongs to the LolB family. As to quaternary structure, monomer.

The protein resides in the cell outer membrane. Functionally, plays a critical role in the incorporation of lipoproteins in the outer membrane after they are released by the LolA protein. The protein is Outer-membrane lipoprotein LolB of Yersinia pseudotuberculosis serotype O:1b (strain IP 31758).